A 385-amino-acid polypeptide reads, in one-letter code: Protein pelota homolog (385 aa).

Residue lysine 162 forms a Glycyl lysine isopeptide (Lys-Gly) (interchain with G-Cter in SUMO2) linkage. A phosphoserine mark is found at serine 374, serine 380, serine 381, and serine 382.

Belongs to the eukaryotic release factor 1 family. Pelota subfamily. In terms of assembly, component of the Pelota-HBS1L complex, also named Dom34-Hbs1 complex, composed of PELO and HBS1L. Interacts with PINK1. Interacts with ABCE1. Interacts with CNOT4. Requires a divalent metal cation as cofactor. In terms of tissue distribution, ubiquitously expressed.

Its subcellular location is the cytoplasm. Its function is as follows. Component of the Pelota-HBS1L complex, a complex that recognizes stalled ribosomes and triggers the No-Go Decay (NGD) pathway. In the Pelota-HBS1L complex, PELO recognizes ribosomes stalled at the 3' end of an mRNA and engages stalled ribosomes by destabilizing mRNA in the mRNA channel. Following mRNA extraction from stalled ribosomes by the SKI complex, the Pelota-HBS1L complex promotes recruitment of ABCE1, which drives the disassembly of stalled ribosomes, followed by degradation of damaged mRNAs as part of the NGD pathway. As part of the PINK1-regulated signaling, upon mitochondrial damage is recruited to the ribosome/mRNA-ribonucleoprotein complex associated to mitochondrial outer membrane thereby enabling the recruitment of autophagy receptors and induction of mitophagy. The sequence is that of Protein pelota homolog from Mus musculus (Mouse).